A 356-amino-acid polypeptide reads, in one-letter code: Probable dual-specificity RNA methyltransferase RlmN (356 aa).

The active-site Proton acceptor is the Glu-100. The Radical SAM core domain maps to 106–340 (TNSRLTTCVS…VSLRASRGLD (235 aa)). Cys-113 and Cys-345 are disulfide-bonded. [4Fe-4S] cluster is bound by residues Cys-120, Cys-124, and Cys-127. Residues 167 to 168 (GE), Ser-197, 226 to 228 (SLH), and Asn-302 contribute to the S-adenosyl-L-methionine site. Cys-345 (S-methylcysteine intermediate) is an active-site residue.

This sequence belongs to the radical SAM superfamily. RlmN family. [4Fe-4S] cluster is required as a cofactor.

Its subcellular location is the cytoplasm. The catalysed reaction is adenosine(2503) in 23S rRNA + 2 reduced [2Fe-2S]-[ferredoxin] + 2 S-adenosyl-L-methionine = 2-methyladenosine(2503) in 23S rRNA + 5'-deoxyadenosine + L-methionine + 2 oxidized [2Fe-2S]-[ferredoxin] + S-adenosyl-L-homocysteine. It carries out the reaction adenosine(37) in tRNA + 2 reduced [2Fe-2S]-[ferredoxin] + 2 S-adenosyl-L-methionine = 2-methyladenosine(37) in tRNA + 5'-deoxyadenosine + L-methionine + 2 oxidized [2Fe-2S]-[ferredoxin] + S-adenosyl-L-homocysteine. Its function is as follows. Specifically methylates position 2 of adenine 2503 in 23S rRNA and position 2 of adenine 37 in tRNAs. The chain is Probable dual-specificity RNA methyltransferase RlmN from Prochlorococcus marinus (strain MIT 9211).